Reading from the N-terminus, the 629-residue chain is DNA ligase B (629 aa).

Catalysis depends on Lys151, which acts as the N6-AMP-lysine intermediate. Polar residues predominate over residues Leu588–Arg597. Residues Leu588 to Asp629 are disordered. Positions Asn598–Gln611 are enriched in basic and acidic residues. Polar residues predominate over residues Asp612–Asp629.

This sequence belongs to the NAD-dependent DNA ligase family. LigB subfamily.

It carries out the reaction NAD(+) + (deoxyribonucleotide)n-3'-hydroxyl + 5'-phospho-(deoxyribonucleotide)m = (deoxyribonucleotide)n+m + AMP + beta-nicotinamide D-nucleotide.. Functionally, catalyzes the formation of phosphodiester linkages between 5'-phosphoryl and 3'-hydroxyl groups in double-stranded DNA using NAD as a coenzyme and as the energy source for the reaction. This Chromohalobacter salexigens (strain ATCC BAA-138 / DSM 3043 / CIP 106854 / NCIMB 13768 / 1H11) protein is DNA ligase B.